A 336-amino-acid chain; its full sequence is Ketol-acid reductoisomerase (NADP(+)) (336 aa).

A KARI N-terminal Rossmann domain is found at 1 to 182 (MAVIYYDKDA…GVTRAGVIET (182 aa)). NADP(+) is bound by residues 25–28 (FGSQ), Arg-48, Ser-51, Ser-53, and 83–86 (DEHQ). Residue His-108 is part of the active site. Gly-134 serves as a coordination point for NADP(+). The KARI C-terminal knotted domain occupies 183–328 (TFKEETETDL…KELRKMMPWL (146 aa)). Mg(2+)-binding residues include Asp-191, Glu-195, Glu-227, and Glu-231. Ser-252 contacts substrate.

This sequence belongs to the ketol-acid reductoisomerase family. Mg(2+) is required as a cofactor.

It carries out the reaction (2R)-2,3-dihydroxy-3-methylbutanoate + NADP(+) = (2S)-2-acetolactate + NADPH + H(+). The catalysed reaction is (2R,3R)-2,3-dihydroxy-3-methylpentanoate + NADP(+) = (S)-2-ethyl-2-hydroxy-3-oxobutanoate + NADPH + H(+). The protein operates within amino-acid biosynthesis; L-isoleucine biosynthesis; L-isoleucine from 2-oxobutanoate: step 2/4. It participates in amino-acid biosynthesis; L-valine biosynthesis; L-valine from pyruvate: step 2/4. Involved in the biosynthesis of branched-chain amino acids (BCAA). Catalyzes an alkyl-migration followed by a ketol-acid reduction of (S)-2-acetolactate (S2AL) to yield (R)-2,3-dihydroxy-isovalerate. In the isomerase reaction, S2AL is rearranged via a Mg-dependent methyl migration to produce 3-hydroxy-3-methyl-2-ketobutyrate (HMKB). In the reductase reaction, this 2-ketoacid undergoes a metal-dependent reduction by NADPH to yield (R)-2,3-dihydroxy-isovalerate. This is Ketol-acid reductoisomerase (NADP(+)) from Thermotoga neapolitana (strain ATCC 49049 / DSM 4359 / NBRC 107923 / NS-E).